A 374-amino-acid chain; its full sequence is MDEDPEEGLLGWGETVFRDEHVFEIDYVPEVFRHRESQLQTLQYALRPAVRGSRPLNVVARGPPGTGKTTAVQKLFGELSGQPGVQTVRVNCQVDSTRYAVFSRVFEEIFDYEPPSSGISFKKLFGQVAERIADDDEVLVVALDDVNYLFYEDEAGDTLYSLLRAHETQPGAKVGVVVVSSDLELDVIEALDGRVQSVFRPEEAYFSAYDRAEITDILRDRVEVGFREGAVAEPVLDAVGGRTDEAGDLRVGIDVLRRAGLHAESRASKTVEMEDVDAVYEDAKHVHLSRTLAALSDNERALVRTVAEQEGDRAGDVYDVFNDRTDLGYTRYTEIVNKLDELGVIDAAYEQRSGRGRSRTLRLTHDSEAVLERL.

ATP is bound by residues 66-70, Y209, and R221; that span reads TGKTT.

It belongs to the CDC6/cdc18 family.

Its function is as follows. Involved in regulation of DNA replication. This is ORC1-type DNA replication protein 6 (orc6) from Halobacterium salinarum (strain ATCC 700922 / JCM 11081 / NRC-1) (Halobacterium halobium).